The primary structure comprises 429 residues: Probable exoglucanase GH6D (429 aa).

Residues 1–17 form the signal peptide; sequence MRAVYAILAGLLATGSA. Residues W75 and S77 each contribute to the substrate site. Catalysis depends on proton donor residues D115 and D162. 2 residues coordinate substrate: N206 and W209. N-linked (GlcNAc...) asparagine glycosylation is present at N237. The substrate site is built by N240, W300, K328, and E332. The segment at 240 to 261 is disordered; that stretch reads NYNPYSTNNPPPYTAGSPSADE. Residues 362-390 form a disordered region; that stretch reads PEIRADGGGGGSPAPGPSSTAVAPSPSAT. The segment covering 378–390 has biased composition (low complexity); it reads PSSTAVAPSPSAT. Residues 394–429 form the CBM1 domain; sequence NCAARWAQCGGQGWTGPTCCAQGTCQASNQWYSQCL.

Belongs to the glycosyl hydrolase 6 (cellulase B) family.

The protein resides in the secreted. Functionally, probable exoglucanase that may play an important function in biomass degradation by catalyzing the hydrolysis of cellulose. This Podospora anserina (strain S / ATCC MYA-4624 / DSM 980 / FGSC 10383) (Pleurage anserina) protein is Probable exoglucanase GH6D.